We begin with the raw amino-acid sequence, 488 residues long: Glutamyl-tRNA(Gln) amidotransferase subunit B, mitochondrial (488 aa).

Belongs to the GatB/GatE family. GatB subfamily. As to quaternary structure, subunit of the heterotrimeric GatFAB amidotransferase (AdT) complex, composed of A, B and F subunits.

The protein localises to the mitochondrion. It carries out the reaction L-glutamyl-tRNA(Gln) + L-glutamine + ATP + H2O = L-glutaminyl-tRNA(Gln) + L-glutamate + ADP + phosphate + H(+). Functionally, allows the formation of correctly charged Gln-tRNA(Gln) through the transamidation of misacylated Glu-tRNA(Gln) in the mitochondria. The reaction takes place in the presence of glutamine and ATP through an activated gamma-phospho-Glu-tRNA(Gln). This Candida albicans (strain WO-1) (Yeast) protein is Glutamyl-tRNA(Gln) amidotransferase subunit B, mitochondrial.